The primary structure comprises 218 residues: DNA-directed RNA polymerase III subunit RPC7-like (218 aa).

The tract at residues 130–218 (TIILPKRPPK…SDDNMDEAIY (89 aa)) is disordered. Basic and acidic residues predominate over residues 139–160 (KTTEDKEETIQKLETLEKKEEE). 2 stretches are compositionally biased toward acidic residues: residues 161–193 (VTSE…EETD) and 201–218 (NGED…EAIY).

Belongs to the eukaryotic RPC7 RNA polymerase subunit family. As to quaternary structure, component of the RNA polymerase III (Pol III) complex consisting of 17 subunits. Pol III exists as two alternative complexes defined by the mutually exclusive incorporation of subunit POLR3G/RPC7alpha or POLR3GL/RPC7beta. Found in a trimeric complex with POLR3C/RPC3 and POLR3F/RPC6. Directly interacts with POLR3C.

It is found in the nucleus. In terms of biological role, DNA-dependent RNA polymerase catalyzes the transcription of DNA into RNA using the four ribonucleoside triphosphates as substrates. Specific peripheric component of RNA polymerase III which synthesizes small RNAs, such as 5S rRNA and tRNAs. The polypeptide is DNA-directed RNA polymerase III subunit RPC7-like (POLR3GL) (Bos taurus (Bovine)).